Reading from the N-terminus, the 917-residue chain is Spermatogenesis-associated protein 31D4 (917 aa).

Residues 29 to 49 form a helical membrane-spanning segment; sequence FICLSGLGLFILYLFYMVLTL. Disordered stretches follow at residues 55–80, 152–195, and 773–798; these read EKNN…KDRK, SVSP…PPPL, and SQET…RSNS. Over residues 63–74 the composition is skewed to basic residues; sequence HQGRARRKRKSV. A compositionally biased stretch (low complexity) spans 152–163; sequence SVSPLASSASGA. Over residues 164 to 177 the composition is skewed to polar residues; the sequence is ESSFTLASTPSATT. The span at 782–798 shows a compositional bias: basic and acidic residues; that stretch reads LLHDPETSSDEDLRSNS.

This sequence belongs to the SPATA31 family.

It is found in the membrane. May play a role in spermatogenesis. In Homo sapiens (Human), this protein is Spermatogenesis-associated protein 31D4 (SPATA31D4).